The primary structure comprises 325 residues: UPF0324 membrane protein Bd1437 (325 aa).

8 helical membrane passes run 21–43, 58–80, 87–105, 115–137, 144–166, 211–230, 243–260, and 302–324; these read IAAL…GIVL, YTHH…MVVG, IGYT…MLIG, STLI…APTI, VSVA…PWIG, ARAL…YFRG, PWFI…TWIP, and LQGV…IGWI.

The protein belongs to the UPF0324 family.

Its subcellular location is the cell membrane. This Bdellovibrio bacteriovorus (strain ATCC 15356 / DSM 50701 / NCIMB 9529 / HD100) protein is UPF0324 membrane protein Bd1437.